A 421-amino-acid polypeptide reads, in one-letter code: Probable acid phosphatase (421 aa).

The active-site Proton donor is Asp-229.

It catalyses the reaction a phosphate monoester + H2O = an alcohol + phosphate. The chain is Probable acid phosphatase from Kluyveromyces lactis (strain ATCC 8585 / CBS 2359 / DSM 70799 / NBRC 1267 / NRRL Y-1140 / WM37) (Yeast).